A 391-amino-acid polypeptide reads, in one-letter code: Ribonuclease 3-like protein 2 (391 aa).

A Nuclear export signal motif is present at residues 7-26 (PEYNFPAITRCSLSNSLPHR). Residues 60-203 (MEAVEKILNY…LAGAVYVDVN (144 aa)) form the RNase III domain. Mg(2+) is bound by residues Glu96, Asp189, and Glu192. 2 consecutive DRBM domains span residues 218 to 294 (EPIV…KLSE) and 313 to 387 (HAKT…ALRK). A disulfide bond links Cys240 and Cys322. Residues 371–387 (KKAESSSAYHMIRALRK) carry the Bipartite nuclear localization motif.

As to quaternary structure, homodimer; disulfide-linked. It depends on Mg(2+) as a cofactor. Mn(2+) serves as cofactor. In terms of tissue distribution, expressed in seeds, leaves and flower buds.

The protein resides in the nucleus. The protein localises to the cytoplasm. Functionally, ribonuclease that cleaves double-stranded RNA (dsRNA). Required for 3'-external transcribed spacer (ETS) cleavage of the pre-rRNA precursors. May promote the production of 21 nucleotide small interfering RNA (siRNA) during post-transcriptional gene silencing (PTGS). The chain is Ribonuclease 3-like protein 2 (RTL2) from Arabidopsis thaliana (Mouse-ear cress).